Reading from the N-terminus, the 199-residue chain is V-type proton ATPase subunit E (199 aa).

The protein belongs to the V-ATPase E subunit family.

Produces ATP from ADP in the presence of a proton gradient across the membrane. The chain is V-type proton ATPase subunit E from Clostridium botulinum (strain 657 / Type Ba4).